Reading from the N-terminus, the 209-residue chain is Small ribosomal subunit protein uS4 (209 aa).

The 64-residue stretch at 99 to 162 folds into the S4 RNA-binding domain; the sequence is RRLDNVVYRL…RESNKFQEMK (64 aa).

Belongs to the universal ribosomal protein uS4 family. In terms of assembly, part of the 30S ribosomal subunit. Contacts protein S5. The interaction surface between S4 and S5 is involved in control of translational fidelity.

Functionally, one of the primary rRNA binding proteins, it binds directly to 16S rRNA where it nucleates assembly of the body of the 30S subunit. In terms of biological role, with S5 and S12 plays an important role in translational accuracy. The chain is Small ribosomal subunit protein uS4 from Syntrophomonas wolfei subsp. wolfei (strain DSM 2245B / Goettingen).